The primary structure comprises 152 residues: Acidic phospholipase A2 homolog textilotoxin D chain (152 aa).

Positions 1 to 19 are cleaved as a signal peptide; it reads MHPAHLLVLLGVCVSLLGA. 7 cysteine pairs are disulfide-bonded: C38–C104, C54–C151, C56–C72, C71–C132, C78–C125, C88–C118, and C111–C123. N-linked (GlcNAc...) asparagine glycosylation occurs at N112.

It belongs to the phospholipase A2 family. Group I subfamily. D49 sub-subfamily. As to quaternary structure, heterohexamer. 2 forms exist: 2 A or 2 B chains, 2 C chains and 2 covalently-linked D chains, and 1 A or 1 B, 1 C, 2 covalently-linked D chains and 2 differentially glycosylated covalently-linked D chains. Textilotoxin was originally described as pentameric. Expressed by the venom gland.

It is found in the secreted. Its function is as follows. Snake venom oligomeric phospholipase A2 that has potent presynaptic neurotoxicity. Chain D is not itself neurotoxic, but it is essential for the neurotoxicity of textilotoxin. Chain D possesses a very low phospholipase activity. The polypeptide is Acidic phospholipase A2 homolog textilotoxin D chain (Pseudonaja textilis (Eastern brown snake)).